A 382-amino-acid polypeptide reads, in one-letter code: uncharacterized protein (382 aa).

The next 12 helical transmembrane spans lie at 14-34, 45-65, 79-99, 102-122, 131-151, 157-177, 204-224, 235-255, 270-290, 291-311, 325-345, and 348-368; these read GLLLLTLAIAVLNTLVPLWLA, VVSSSYFTGNLVGTLLTGYVI, FIFAAGCAGLGLMIGFWSWLA, FVAGVGCAMIWVVVESALMCS, LLAAYMMVYYVGTFLGQLLVS, LMSVLPWVTGLTLAGILPLLF, LGVNGCIISGIVLGSLYGLMP, ASIGFWMAVLVSAGILGQWPI, VQVFVVILGSIAMLSQAAMAP, ALFILGAAGFTLYPVAMAWAC, ALLLSYTVGSLLGPSFTAMLM, and FSDNLLFIMIASVSFIYLLML.

The protein belongs to the major facilitator superfamily. YcaD (TC 2.A.1.26) family.

The protein localises to the cell inner membrane. This is an uncharacterized protein from Shigella dysenteriae serotype 1 (strain Sd197).